The following is a 260-amino-acid chain: Acyl-[acyl-carrier-protein]--UDP-N-acetylglucosamine O-acyltransferase (260 aa).

The protein belongs to the transferase hexapeptide repeat family. LpxA subfamily. Homotrimer.

It is found in the cytoplasm. The enzyme catalyses a (3R)-hydroxyacyl-[ACP] + UDP-N-acetyl-alpha-D-glucosamine = a UDP-3-O-[(3R)-3-hydroxyacyl]-N-acetyl-alpha-D-glucosamine + holo-[ACP]. The protein operates within glycolipid biosynthesis; lipid IV(A) biosynthesis; lipid IV(A) from (3R)-3-hydroxytetradecanoyl-[acyl-carrier-protein] and UDP-N-acetyl-alpha-D-glucosamine: step 1/6. Functionally, involved in the biosynthesis of lipid A, a phosphorylated glycolipid that anchors the lipopolysaccharide to the outer membrane of the cell. This chain is Acyl-[acyl-carrier-protein]--UDP-N-acetylglucosamine O-acyltransferase, found in Sulfurovum sp. (strain NBC37-1).